A 129-amino-acid chain; its full sequence is Small ribosomal subunit protein uS9 (129 aa).

It belongs to the universal ribosomal protein uS9 family.

The chain is Small ribosomal subunit protein uS9 from Helicobacter hepaticus (strain ATCC 51449 / 3B1).